The primary structure comprises 357 residues: Cobalt-precorrin-5B C(1)-methyltransferase (357 aa).

This sequence belongs to the CbiD family.

It carries out the reaction Co-precorrin-5B + S-adenosyl-L-methionine = Co-precorrin-6A + S-adenosyl-L-homocysteine. The protein operates within cofactor biosynthesis; adenosylcobalamin biosynthesis; cob(II)yrinate a,c-diamide from sirohydrochlorin (anaerobic route): step 6/10. Catalyzes the methylation of C-1 in cobalt-precorrin-5B to form cobalt-precorrin-6A. This chain is Cobalt-precorrin-5B C(1)-methyltransferase, found in Gloeobacter violaceus (strain ATCC 29082 / PCC 7421).